The sequence spans 146 residues: MAKEFSRTRRIAQQLQQELAVVLQRDMKDPRIGFVTVNDVDVSRDLSYAKVFVTFFEEDKELVQEKLNALITAAPYIRTLVAGRMKLRVMPEIRFVYDSSLVEGMRMSNLVSQVINSDKAKQQQFGSAEDVTSNDIDEADDTEGKA.

Residues Gln-122–Asn-134 show a composition bias toward polar residues. The segment at Gln-122–Ala-146 is disordered. A compositionally biased stretch (acidic residues) spans Asp-135–Ala-146.

Belongs to the RbfA family. Monomer. Binds 30S ribosomal subunits, but not 50S ribosomal subunits or 70S ribosomes.

It localises to the cytoplasm. Its function is as follows. One of several proteins that assist in the late maturation steps of the functional core of the 30S ribosomal subunit. Associates with free 30S ribosomal subunits (but not with 30S subunits that are part of 70S ribosomes or polysomes). Required for efficient processing of 16S rRNA. May interact with the 5'-terminal helix region of 16S rRNA. The chain is Ribosome-binding factor A from Shewanella sp. (strain ANA-3).